Consider the following 281-residue polypeptide: Shikimate dehydrogenase (NADP(+)) (281 aa).

Residues 15–17 (SKS) and threonine 62 contribute to the shikimate site. The active-site Proton acceptor is the lysine 66. Shikimate-binding residues include asparagine 87 and aspartate 102. NADP(+) is bound by residues 127–131 (GAGGS), 151–156 (NRTPER), and leucine 217. A shikimate-binding site is contributed by tyrosine 219. An NADP(+)-binding site is contributed by glycine 241.

It belongs to the shikimate dehydrogenase family. In terms of assembly, homodimer.

The catalysed reaction is shikimate + NADP(+) = 3-dehydroshikimate + NADPH + H(+). It participates in metabolic intermediate biosynthesis; chorismate biosynthesis; chorismate from D-erythrose 4-phosphate and phosphoenolpyruvate: step 4/7. Functionally, involved in the biosynthesis of the chorismate, which leads to the biosynthesis of aromatic amino acids. Catalyzes the reversible NADPH linked reduction of 3-dehydroshikimate (DHSA) to yield shikimate (SA). This Stenotrophomonas maltophilia (strain R551-3) protein is Shikimate dehydrogenase (NADP(+)).